The primary structure comprises 266 residues: Prolactin-7A1 (266 aa).

The signal sequence occupies residues 1–30; it reads MPLSFTQPCSSGALLLLVVSNLLLWENVAC. N36, N58, N110, N149, and N157 each carry an N-linked (GlcNAc...) asparagine glycan. 2 cysteine pairs are disulfide-bonded: C114–C231 and C248–C257.

Belongs to the somatotropin/prolactin family. Expressed specifically in the placenta. Detected only in the trophoblast giant cells.

The protein resides in the secreted. This chain is Prolactin-7A1 (Prl7a1), found in Mus musculus (Mouse).